Reading from the N-terminus, the 339-residue chain is MKEILEKIKKNAIEELNNVVDKETIESIRVKYLGKKGELTKILRGMGGLSAEERPIVGKLANEIRKNIEEIIETTLKEIKEKEKNIKLSEETIDITLPGKRQYLGKRHPLEQTLDKMKEIFINMGFTVEEGPEIELDYYNFEALNIPKNHPARGEQDTFYINDNVVLRTQTSPIQIRTMESQKLPIKMIAPGKVYRSDSVDATHSPIFYQMEGLVVDKGVTFADLKGTLDMFAKKMFGEDLKTKFRPHHFPFTEPSAEMDATCFVCHGEGCKVCKGEGWIEILGGGMVHPQVLKNCGIDPEVYSGFAFGFGVDRMVMQKYGIDDIRLLYESDMRFLNQF.

Position 254 (glutamate 254) interacts with Mg(2+).

It belongs to the class-II aminoacyl-tRNA synthetase family. Phe-tRNA synthetase alpha subunit type 1 subfamily. As to quaternary structure, tetramer of two alpha and two beta subunits. It depends on Mg(2+) as a cofactor.

It localises to the cytoplasm. The enzyme catalyses tRNA(Phe) + L-phenylalanine + ATP = L-phenylalanyl-tRNA(Phe) + AMP + diphosphate + H(+). This Clostridium tetani (strain Massachusetts / E88) protein is Phenylalanine--tRNA ligase alpha subunit.